The primary structure comprises 400 residues: Tyrosine--tRNA ligase (400 aa).

Positions 45–54 (PTAPDLHLGH) match the 'HIGH' region motif. Positions 230-234 (KMSKS) match the 'KMSKS' region motif. K233 contributes to the ATP binding site. The S4 RNA-binding domain occupies 339-399 (EWIARVLVIA…GKRRFAKVII (61 aa)).

It belongs to the class-I aminoacyl-tRNA synthetase family. TyrS type 2 subfamily. As to quaternary structure, homodimer.

The protein resides in the cytoplasm. The enzyme catalyses tRNA(Tyr) + L-tyrosine + ATP = L-tyrosyl-tRNA(Tyr) + AMP + diphosphate + H(+). Its function is as follows. Catalyzes the attachment of tyrosine to tRNA(Tyr) in a two-step reaction: tyrosine is first activated by ATP to form Tyr-AMP and then transferred to the acceptor end of tRNA(Tyr). The protein is Tyrosine--tRNA ligase of Helicobacter hepaticus (strain ATCC 51449 / 3B1).